The following is a 774-amino-acid chain: MQYPAATAEGLSGPLSGAYTLPAFKFQPRRESIDWRRISAVDVDRVARELDVATLQENIAGVTFCNLDGEVCNHCRQPVDPVLLKVLRLAQLIIEYLLHCQDCLSASVAQLEARLQASLGQQQRGQQELGRQADELKGVREESRRRRKMISTLQQLLLQTSAHSYHTCHLCDKTFMNATFLRGHIQRRHAGMADVGKQKQEQPLGEVLEELRAKLKWTQGELEAQREAERQRQVQELEMARQREMEAKKKFDEWKEKERSKLYGEIDKLKQLFWDEFKTVANQNSTLEEKLKALQSYSMTESHLGSLRDEESEERLKHAQEVQALQEKMEVQKTEWKRKMKALHEERAAERRQLQEENERLHVSLSQDQKKAAAQSQRHINALRAQLQEQARLIESQEETIQTLSLRKVEEVQEMPKAVATEEDSSEEELEASLEERQEQRKVLAALRKNPTWLKQFRPILEDTLEEKLEGLGIKRDTKGISAQTVRRLEPLLRTQREQIARSFREFPSLREKLNKEVSSRVKQRWESTTQPDGQPPVKSQRVTLATREVRPKTRTLTVALPSKPAEPSTPTLQGHSSHGPGLTQVSTPIPRPRVHGPSSTPVSPGSGLSSTPPFSSEEEPEGDVVQRVSLQPPKVLPRSAAKPEDNWGWSDSETSEESAQPPGKGSGGLASSGTLVQSIVKNLEKQLETPAKKPSGGVNMFLRPNAALQRASTPARKSQLSEDESDVEISSLEDLSQDLGQKGKPKPLSHSKLPEKFDVSPWSSGSRPRIPGW.

Residues 166-189 (HTCHLCDKTFMNATFLRGHIQRRH) form a C2H2-type zinc finger. A coiled-coil region spans residues 204-450 (LGEVLEELRA…RKVLAALRKN (247 aa)). 3 disordered regions span residues 415-435 (MPKAVATEEDSSEEELEASLE), 515-674 (NKEV…ASSG), and 686-774 (KQLE…IPGW). Residues 421–433 (TEEDSSEEELEAS) are compositionally biased toward acidic residues. 2 positions are modified to phosphoserine: S425 and S426. Residues 515–526 (NKEVSSRVKQRW) show a composition bias toward basic and acidic residues. Low complexity predominate over residues 597–616 (GPSSTPVSPGSGLSSTPPFS).

It belongs to the DZIP C2H2-type zinc-finger protein family. As to quaternary structure, interacts with SEPTIN2.

It is found in the cytoplasm. Its subcellular location is the cytoskeleton. It localises to the cilium basal body. The protein resides in the microtubule organizing center. The protein localises to the centrosome. It is found in the centriole. Its function is as follows. Involved in primary cilium formation. Probably acts as a transition zone protein required for localization of PKD1/PC1 and PKD2/PC2 to the ciliary membrane. This Mus musculus (Mouse) protein is Cilium assembly protein DZIP1L.